The sequence spans 677 residues: Methionine--tRNA ligase (677 aa).

Residues 15–25 (PYANGSIHLGH) carry the 'HIGH' region motif. The Zn(2+) site is built by Cys146, Cys149, Cys159, and Cys162. Residues 333-337 (KMSKS) carry the 'KMSKS' region motif. Position 336 (Lys336) interacts with ATP. Residues 575–677 (DFAKIDLRVA…DGAKPGQQVK (103 aa)) enclose the tRNA-binding domain.

This sequence belongs to the class-I aminoacyl-tRNA synthetase family. MetG type 1 subfamily. In terms of assembly, homodimer. The cofactor is Zn(2+).

It localises to the cytoplasm. The catalysed reaction is tRNA(Met) + L-methionine + ATP = L-methionyl-tRNA(Met) + AMP + diphosphate. Its function is as follows. Is required not only for elongation of protein synthesis but also for the initiation of all mRNA translation through initiator tRNA(fMet) aminoacylation. This chain is Methionine--tRNA ligase, found in Salmonella typhimurium (strain LT2 / SGSC1412 / ATCC 700720).